Consider the following 257-residue polypeptide: Nickel import system ATP-binding protein NikD (257 aa).

The 242-residue stretch at isoleucine 4–isoleucine 245 folds into the ABC transporter domain. Glycine 37–serine 44 contributes to the ATP binding site.

It belongs to the ABC transporter superfamily. In terms of assembly, the complex is composed of two ATP-binding proteins (NikD and NikE), two transmembrane proteins (NikB and NikC) and a solute-binding protein (NikA).

It localises to the cell membrane. It catalyses the reaction Ni(2+)(out) + ATP + H2O = Ni(2+)(in) + ADP + phosphate + H(+). Part of the ABC transporter complex NikABCDE (Opp2) involved in nickel import. Probably responsible for energy coupling to the transport system. The sequence is that of Nickel import system ATP-binding protein NikD from Staphylococcus aureus (strain MRSA252).